We begin with the raw amino-acid sequence, 396 residues long: MTRVVHIIGAAFLLSSYAYCGLSRFNEHDIEGGDSYKRVKREFERLGSKWLGGTINYYYADNNNSVKEKVKSAIAYIANHTCIKFNEDPTHWQRLKIFTSELSHCRSTIGAPGTRSGSAGELSMETGWCANIGSIVHEFSHSLGRYHEHTRPDRDNSLKVTSTDYEARPRPWGMTTMYGPFEHGSIMMYHSSNYGVGKMEPYDMEYKNTMGSRRVTFYDMYKINQYYGCGCSTQLECKNGGYTSPSDCSRCNCPKGFFGKLCNERRQQDSYELKATYGRWQTQTISFNYKPEPVSDGFYSTFVYITGEANSTIEITMEGLENVICTAGCTWNGVEIKSREDSRITSPVMCCKDEPLYKKVFKSLHNPTIIELYSKETAPSTATFKYRFMNDKIVFG.

A signal peptide spans 1–20 (MTRVVHIIGAAFLLSSYAYC). Positions 44-230 (ERLGSKWLGG…YKINQYYGCG (187 aa)) constitute a Peptidase M12A domain. N-linked (GlcNAc...) asparagine glycans are attached at residues Asn-63 and Asn-79. Intrachain disulfides connect Cys-82–Cys-229, Cys-105–Cys-129, Cys-231–Cys-251, and Cys-253–Cys-262. His-137 lines the Zn(2+) pocket. Residue Glu-138 is part of the active site. Residues His-141 and His-147 each contribute to the Zn(2+) site. Positions 224–263 (NQYYGCGCSTQLECKNGGYTSPSDCSRCNCPKGFFGKLCN) constitute an EGF-like domain. N-linked (GlcNAc...) asparagine glycosylation occurs at Asn-310.

It depends on Zn(2+) as a cofactor.

The protein resides in the secreted. Its function is as follows. Metalloprotease. The sequence is that of Zinc metalloproteinase nas-24 (nas-24) from Caenorhabditis elegans.